Here is a 383-residue protein sequence, read N- to C-terminus: ATP phosphoribosyltransferase regulatory subunit (383 aa).

It belongs to the class-II aminoacyl-tRNA synthetase family. HisZ subfamily. Heteromultimer composed of HisG and HisZ subunits.

Its subcellular location is the cytoplasm. The protein operates within amino-acid biosynthesis; L-histidine biosynthesis; L-histidine from 5-phospho-alpha-D-ribose 1-diphosphate: step 1/9. Functionally, required for the first step of histidine biosynthesis. May allow the feedback regulation of ATP phosphoribosyltransferase activity by histidine. In Desulfitobacterium hafniense (strain Y51), this protein is ATP phosphoribosyltransferase regulatory subunit.